We begin with the raw amino-acid sequence, 266 residues long: Gasdermin bGSDM (266 aa).

A lipid anchor (S-palmitoyl cysteine) is attached at Cys6. 4 beta stranded membrane passes run 70 to 86 (ISHSETSRKSLQAAGNF), 99 to 117 (APKLDLSFARGAVVTFSFS), 163 to 180 (AIDMTLATDGSAKVDVQA), and 189 to 205 (LGGKAECEVKSSTTISF). Positions 245-266 (GAAEPYLLRRGQVLIVEDMQAT) are C-terminal region.

Belongs to the bacterial gasdermin family. In terms of assembly, monomer. Forms large, homooligomeric ring-shaped pores when inserted in membranes. In terms of processing, cleavage by the adjacently encoded protease (probably ISF6_0256) predicted to occur between Glu-244 and Gly-245 relieves autoinhibition, releasing the N-terminus which initiates loss of cell integrity. Palmitoylation helps stabilize the inactive state; may self palmitoylate. Palmitoylation plays a significant role in pore formation.

Its subcellular location is the cytoplasm. It is found in the cell inner membrane. Its activity is regulated as follows. The full-length protein before cleavage is inactive: intramolecular interactions between the N-terminal domain and the C-terminal region as well as the lipid modification, mediate autoinhibition. The pyroptosis-like-inducing activity is carried by the released N-terminal domain (Gasdermin bGSDM, N-terminus). Functionally, precursor of a pore-forming protein involved in defense against bacteriophages. Cleavage of this precursor by its dedicated, neighboring protease (probably ISF6_0256) releases the active moiety (gasdermin bGSDM, N-terminus) which inserts into membranes, forming pores and triggering cell death. Its function is as follows. Pore-forming protein that causes membrane permeabilization via a pyroptosis-like activity. Makes ring-like pores with an interior pore diameter of 300-400 Angstroms, when integrated in liposomes. This chain is Gasdermin bGSDM, found in Piscinibacter sakaiensis (Ideonella sakaiensis).